Reading from the N-terminus, the 227-residue chain is A-type potassium channel modulatory protein KCNIP1 (227 aa).

The 57-residue stretch at 38-94 (LEMTMVCHRPEGLEQLEAQTNFTKRELQVLYRGFKNECPSGVVNEETFKQIYAQFFP) folds into the EF-hand 1; degenerate domain. EF-hand domains lie at 97–132 (DAST…LLRG), 133–168 (TVHE…IYDM), and 181–216 (TPRQ…DDNI). Ca(2+)-binding residues include aspartate 146, asparagine 148, aspartate 150, tyrosine 152, glutamate 157, aspartate 194, asparagine 196, aspartate 198, and glutamate 205. The tract at residues 214 to 227 (DNIMRSLQLFQNVM) is interaction with KCND2.

It belongs to the recoverin family. In terms of assembly, component of heteromultimeric potassium channels. Identified in potassium channel complexes containing KCND1, KCND2, KCND3, KCNIP1, KCNIP2, KCNIP3, KCNIP4, DPP6 and DPP10. Part of a heterooctamer composed of the tetrameric channel and four KCNIP1 chains. Probably part of a complex consisting of KCNIP1, KCNIP2 isoform 3 and KCND2. Self-associates to form homodimers and homotetramers. Interacts with KCNIP2 isoform 3 in a calcium-dependent manner. Interacts with KCND2; this interaction mediates the capture of both the N- and C-terminus of KCND2, thus preventing KCND2 N-type inactivation and modulates the channel gating kinetics. Interacts with KCND3; each KCNIP1 monomer interacts with two adjacent KCND3 subunits, through both the N-terminal inactivation ball of a KCND3 subunit and a C-terminal helix from the adjacent KCND3 subunit, clamping them together; this interaction stabilizes the tetrameric form and modulates the channel gating kinetics namely channel activation and inactivation kinetics and rate of recovery from inactivation. Expressed in brain. Found in a subpopulation of neurons widely distributed and enriched in Purkinje cells of the cerebellum and in the reticular thalamic and medial habenular nuclei.

Its subcellular location is the cell membrane. The protein resides in the cytoplasm. The protein localises to the cell projection. It is found in the dendrite. Its function is as follows. Regulatory subunit of Kv4/D (Shal)-type voltage-gated rapidly inactivating A-type potassium channels. Regulates channel density, inactivation kinetics and rate of recovery from inactivation in a calcium-dependent and isoform-specific manner. Modulates KCND2/Kv4.2 currents. In vitro, modulates KCND1/Kv4.1 currents. Increases the presence of KCND2 at the cell surface. This is A-type potassium channel modulatory protein KCNIP1 from Mus musculus (Mouse).